A 227-amino-acid polypeptide reads, in one-letter code: Large ribosomal subunit protein uL3 (227 aa).

Gln-154 carries the N5-methylglutamine modification.

Belongs to the universal ribosomal protein uL3 family. As to quaternary structure, part of the 50S ribosomal subunit. Forms a cluster with proteins L14 and L19. Methylated by PrmB.

Its function is as follows. One of the primary rRNA binding proteins, it binds directly near the 3'-end of the 23S rRNA, where it nucleates assembly of the 50S subunit. The protein is Large ribosomal subunit protein uL3 of Acidiphilium cryptum (strain JF-5).